The following is a 429-amino-acid chain: 3-phosphoshikimate 1-carboxyvinyltransferase (429 aa).

3-phosphoshikimate contacts are provided by lysine 20, serine 21, and arginine 25. Lysine 20 provides a ligand contact to phosphoenolpyruvate. Positions 89 and 118 each coordinate phosphoenolpyruvate. 6 residues coordinate 3-phosphoshikimate: serine 164, serine 165, glutamine 166, serine 192, aspartate 311, and lysine 338. Glutamine 166 contacts phosphoenolpyruvate. Aspartate 311 acts as the Proton acceptor in catalysis. Phosphoenolpyruvate-binding residues include arginine 342 and arginine 384.

It belongs to the EPSP synthase family. As to quaternary structure, monomer.

The protein resides in the cytoplasm. The catalysed reaction is 3-phosphoshikimate + phosphoenolpyruvate = 5-O-(1-carboxyvinyl)-3-phosphoshikimate + phosphate. It functions in the pathway metabolic intermediate biosynthesis; chorismate biosynthesis. Catalyzes the transfer of the enolpyruvyl moiety of phosphoenolpyruvate (PEP) to the 5-hydroxyl of shikimate-3-phosphate (S3P) to produce enolpyruvyl shikimate-3-phosphate and inorganic phosphate. The polypeptide is 3-phosphoshikimate 1-carboxyvinyltransferase (Methanococcus maripaludis (strain C6 / ATCC BAA-1332)).